A 599-amino-acid polypeptide reads, in one-letter code: 2-succinyl-5-enolpyruvyl-6-hydroxy-3-cyclohexene-1-carboxylate synthase (599 aa).

A compositionally biased stretch (low complexity) spans 1–21; that stretch reads MTSENPLDPNNAYAAADDAPL. The segment at 1-35 is disordered; it reads MTSENPLDPNNAYAAADDAPLSEGDPTGAPADSGS.

Belongs to the TPP enzyme family. MenD subfamily. As to quaternary structure, homodimer. The cofactor is Mg(2+). Mn(2+) is required as a cofactor. Requires thiamine diphosphate as cofactor.

It carries out the reaction isochorismate + 2-oxoglutarate + H(+) = 5-enolpyruvoyl-6-hydroxy-2-succinyl-cyclohex-3-ene-1-carboxylate + CO2. It participates in quinol/quinone metabolism; 1,4-dihydroxy-2-naphthoate biosynthesis; 1,4-dihydroxy-2-naphthoate from chorismate: step 2/7. It functions in the pathway quinol/quinone metabolism; menaquinone biosynthesis. Its function is as follows. Catalyzes the thiamine diphosphate-dependent decarboxylation of 2-oxoglutarate and the subsequent addition of the resulting succinic semialdehyde-thiamine pyrophosphate anion to isochorismate to yield 2-succinyl-5-enolpyruvyl-6-hydroxy-3-cyclohexene-1-carboxylate (SEPHCHC). The chain is 2-succinyl-5-enolpyruvyl-6-hydroxy-3-cyclohexene-1-carboxylate synthase from Arthrobacter sp. (strain FB24).